The sequence spans 734 residues: Photosystem I P700 chlorophyll a apoprotein A2 (734 aa).

8 consecutive transmembrane segments (helical) span residues 46 to 69, 135 to 158, 175 to 199, 273 to 291, 330 to 353, 369 to 395, 417 to 439, and 517 to 535; these read IFAS…FHVA, LYTG…LHLQ, LNHH…HVAI, IAHH…GHMY, LHFQ…QHMY, AALY…IFFI, AIIS…LYVH, and FLVH…LILV. The [4Fe-4S] cluster site is built by C559 and C568. 2 helical membrane-spanning segments follow: residues 575–596 and 643–665; these read AFYL…YWHW and LSVW…MFLI. Residues H654, M662, and Y670 each coordinate chlorophyll a. Position 671 (W671) interacts with phylloquinone. The helical transmembrane segment at 707–727 threads the bilayer; it reads LVGLAHFSVGYIFTYAAFLIA.

Belongs to the PsaA/PsaB family. The PsaA/B heterodimer binds the P700 chlorophyll special pair and subsequent electron acceptors. PSI consists of a core antenna complex that captures photons, and an electron transfer chain that converts photonic excitation into a charge separation. The eukaryotic PSI reaction center is composed of at least 11 subunits. The cofactor is P700 is a chlorophyll a/chlorophyll a' dimer, A0 is one or more chlorophyll a, A1 is one or both phylloquinones and FX is a shared 4Fe-4S iron-sulfur center..

Its subcellular location is the plastid. The protein resides in the chloroplast thylakoid membrane. It carries out the reaction reduced [plastocyanin] + hnu + oxidized [2Fe-2S]-[ferredoxin] = oxidized [plastocyanin] + reduced [2Fe-2S]-[ferredoxin]. PsaA and PsaB bind P700, the primary electron donor of photosystem I (PSI), as well as the electron acceptors A0, A1 and FX. PSI is a plastocyanin-ferredoxin oxidoreductase, converting photonic excitation into a charge separation, which transfers an electron from the donor P700 chlorophyll pair to the spectroscopically characterized acceptors A0, A1, FX, FA and FB in turn. Oxidized P700 is reduced on the lumenal side of the thylakoid membrane by plastocyanin. This Psilotum nudum (Whisk fern) protein is Photosystem I P700 chlorophyll a apoprotein A2.